The chain runs to 356 residues: S-adenosylmethionine:tRNA ribosyltransferase-isomerase (356 aa).

This sequence belongs to the QueA family. As to quaternary structure, monomer.

It is found in the cytoplasm. It carries out the reaction 7-aminomethyl-7-carbaguanosine(34) in tRNA + S-adenosyl-L-methionine = epoxyqueuosine(34) in tRNA + adenine + L-methionine + 2 H(+). Its pathway is tRNA modification; tRNA-queuosine biosynthesis. Functionally, transfers and isomerizes the ribose moiety from AdoMet to the 7-aminomethyl group of 7-deazaguanine (preQ1-tRNA) to give epoxyqueuosine (oQ-tRNA). The polypeptide is S-adenosylmethionine:tRNA ribosyltransferase-isomerase (Cronobacter sakazakii (strain ATCC BAA-894) (Enterobacter sakazakii)).